Reading from the N-terminus, the 543-residue chain is Cytochrome P450 monooxygenase 205 (543 aa).

Residues 9–29 (LISLGVAALAVAVWKAIVMVI) form a helical membrane-spanning segment. N-linked (GlcNAc...) asparagine glycosylation is found at Asn332 and Asn434. Cys479 is a binding site for heme.

Belongs to the cytochrome P450 family. Heme serves as cofactor.

Its subcellular location is the membrane. It participates in secondary metabolite biosynthesis. Its function is as follows. Cytochrome P450 monooxygenase that is able to use carbazole and phenanthrene as substrates for oxidation. This chain is Cytochrome P450 monooxygenase 205, found in Postia placenta (strain ATCC 44394 / Madison 698-R) (Brown rot fungus).